The chain runs to 207 residues: Enolase (207 aa).

Gln162 is a (2R)-2-phosphoglycerate binding site. Catalysis depends on Glu204, which acts as the Proton donor.

It belongs to the enolase family.

It localises to the cytoplasm. It is found in the secreted. The protein localises to the cell surface. The catalysed reaction is (2R)-2-phosphoglycerate = phosphoenolpyruvate + H2O. Its pathway is carbohydrate degradation; glycolysis; pyruvate from D-glyceraldehyde 3-phosphate: step 4/5. Functionally, catalyzes the reversible conversion of 2-phosphoglycerate (2-PG) into phosphoenolpyruvate (PEP). It is essential for the degradation of carbohydrates via glycolysis. This Campylobacter fetus protein is Enolase.